The following is a 335-amino-acid chain: Phosphate acyltransferase (335 aa).

The protein belongs to the PlsX family. As to quaternary structure, homodimer. Probably interacts with PlsY.

It is found in the cytoplasm. The enzyme catalyses a fatty acyl-[ACP] + phosphate = an acyl phosphate + holo-[ACP]. Its pathway is lipid metabolism; phospholipid metabolism. Its function is as follows. Catalyzes the reversible formation of acyl-phosphate (acyl-PO(4)) from acyl-[acyl-carrier-protein] (acyl-ACP). This enzyme utilizes acyl-ACP as fatty acyl donor, but not acyl-CoA. In Brevibacillus brevis (strain 47 / JCM 6285 / NBRC 100599), this protein is Phosphate acyltransferase.